The following is a 208-amino-acid chain: Large ribosomal subunit protein uL4 (208 aa).

The interval 51–79 (AKERAEVSFSTKKLKKQKGTGGARAGSRK) is disordered.

Belongs to the universal ribosomal protein uL4 family. As to quaternary structure, part of the 50S ribosomal subunit.

One of the primary rRNA binding proteins, this protein initially binds near the 5'-end of the 23S rRNA. It is important during the early stages of 50S assembly. It makes multiple contacts with different domains of the 23S rRNA in the assembled 50S subunit and ribosome. In terms of biological role, forms part of the polypeptide exit tunnel. This Cytophaga hutchinsonii (strain ATCC 33406 / DSM 1761 / CIP 103989 / NBRC 15051 / NCIMB 9469 / D465) protein is Large ribosomal subunit protein uL4.